Reading from the N-terminus, the 886-residue chain is Alanine--tRNA ligase (886 aa).

Zn(2+)-binding residues include H564, H568, C666, and H670.

Belongs to the class-II aminoacyl-tRNA synthetase family. Zn(2+) serves as cofactor.

It is found in the cytoplasm. The catalysed reaction is tRNA(Ala) + L-alanine + ATP = L-alanyl-tRNA(Ala) + AMP + diphosphate. Functionally, catalyzes the attachment of alanine to tRNA(Ala) in a two-step reaction: alanine is first activated by ATP to form Ala-AMP and then transferred to the acceptor end of tRNA(Ala). Also edits incorrectly charged Ser-tRNA(Ala) and Gly-tRNA(Ala) via its editing domain. The protein is Alanine--tRNA ligase of Prochlorococcus marinus (strain AS9601).